A 759-amino-acid polypeptide reads, in one-letter code: DNA topoisomerase 4 subunit A (759 aa).

The region spanning L44–A516 is the Topo IIA-type catalytic domain. The active-site O-(5'-phospho-DNA)-tyrosine intermediate is Y132.

This sequence belongs to the type II topoisomerase GyrA/ParC subunit family. ParC type 1 subfamily. As to quaternary structure, heterotetramer composed of ParC and ParE.

It is found in the cell membrane. It catalyses the reaction ATP-dependent breakage, passage and rejoining of double-stranded DNA.. Topoisomerase IV is essential for chromosome segregation. It relaxes supercoiled DNA. Performs the decatenation events required during the replication of a circular DNA molecule. The chain is DNA topoisomerase 4 subunit A from Caulobacter vibrioides (strain ATCC 19089 / CIP 103742 / CB 15) (Caulobacter crescentus).